A 490-amino-acid polypeptide reads, in one-letter code: AP-5 complex subunit mu-1 (490 aa).

An MHD domain is found at lysine 206–asparagine 476.

It belongs to the adaptor complexes medium subunit family. Probably part of the adaptor protein complex 5 (AP-5) a tetramer composed of AP5B1, AP5M1, AP5S1 and AP5Z1.

The protein localises to the cytoplasm. It localises to the cytosol. Its subcellular location is the late endosome membrane. It is found in the lysosome membrane. In terms of biological role, as part of AP-5, a probable fifth adaptor protein complex it may be involved in endosomal transport. The chain is AP-5 complex subunit mu-1 (AP5M1) from Macaca fascicularis (Crab-eating macaque).